Consider the following 96-residue polypeptide: Cytoplasmic envelopment protein 3 (96 aa).

G2 is lipidated: N-myristoyl glycine; by host. Positions 18–19 (LI) match the Di-leucine-like internalization motif motif. An asp/Glu-rich (acidic) region spans residues 37-43 (DIESEEE). S40 is subject to Phosphoserine. The interval 57 to 96 (RAPGRQRLRSSDPPSRHTHRRTPGGACPATQFPPPMSDSE) is disordered. Over residues 87-96 (QFPPPMSDSE) the composition is skewed to pro residues.

This sequence belongs to the herpesviridae cytoplasmic envelopment protein 3 family. Interacts with cytoplasmic envelopment protein 2; this interaction is essential for the proper localization of each protein to the assembly complex and thus for the production of infectious virus. Interacts with gE (via C-terminus). Interacts with gD (via C-terminus). Interacts with UL56. Post-translationally, myristoylation and palmitoylation (probably on one or more of the nearby cysteines at the N-terminus) enable membrane-binding and Golgi apparatus-specific targeting and are essential for efficient packaging. In terms of processing, phosphorylated. Phosphorylation does not seem to be required for recycling to the host Golgi apparatus. Packaging is selective for underphosphorylated forms.

The protein resides in the virion tegument. It localises to the virion membrane. Its subcellular location is the host cell membrane. The protein localises to the host Golgi apparatus membrane. Functionally, plays an important role in the cytoplasmic envelopment of tegument proteins and capsids during the assembly and egress processes. Also participates in viral entry at the fusion step probably by regulating the core fusion machinery. The chain is Cytoplasmic envelopment protein 3 from Human herpesvirus 1 (strain KOS) (HHV-1).